Consider the following 234-residue polypeptide: Enolase-phosphatase E1 (234 aa).

Residues aspartate 10 and glutamate 12 each coordinate Mg(2+). Substrate-binding positions include 125-126 (SS) and lysine 162. Aspartate 188 lines the Mg(2+) pocket.

The protein belongs to the HAD-like hydrolase superfamily. MasA/MtnC family. In terms of assembly, monomer. Requires Mg(2+) as cofactor.

It is found in the cytoplasm. Its subcellular location is the nucleus. It carries out the reaction 5-methylsulfanyl-2,3-dioxopentyl phosphate + H2O = 1,2-dihydroxy-5-(methylsulfanyl)pent-1-en-3-one + phosphate. It participates in amino-acid biosynthesis; L-methionine biosynthesis via salvage pathway; L-methionine from S-methyl-5-thio-alpha-D-ribose 1-phosphate: step 3/6. Its pathway is amino-acid biosynthesis; L-methionine biosynthesis via salvage pathway; L-methionine from S-methyl-5-thio-alpha-D-ribose 1-phosphate: step 4/6. In terms of biological role, bifunctional enzyme that catalyzes the enolization of 2,3-diketo-5-methylthiopentyl-1-phosphate (DK-MTP-1-P) into the intermediate 2-hydroxy-3-keto-5-methylthiopentenyl-1-phosphate (HK-MTPenyl-1-P), which is then dephosphorylated to form the acireductone 1,2-dihydroxy-3-keto-5-methylthiopentene (DHK-MTPene). The sequence is that of Enolase-phosphatase E1 from Sordaria macrospora (strain ATCC MYA-333 / DSM 997 / K(L3346) / K-hell).